Consider the following 827-residue polypeptide: Penicillin-binding protein 1A (827 aa).

The Cytoplasmic segment spans residues 1–18 (MGKKKKKRKSSAFKIILN). Residues 19-39 (VFLSIFLVAGVAFGGIVFAMI) traverse the membrane as a helical; Signal-anchor for type II membrane protein segment. The Extracellular portion of the chain corresponds to 40 to 827 (KTAPPLNVQQ…QNHEDNKNKQ (788 aa)). The segment at 57–229 (SILYDDKGQY…PSVYYPYSSA (173 aa)) is transglycosylase. Glutamate 96 serves as the catalytic Proton donor; for transglycosylase activity. Residues 357–641 (ASAVIMDYHN…AARLWGDIMK (285 aa)) are transpeptidase. Residue serine 398 is the Acyl-ester intermediate; for transpeptidase activity of the active site. Residues 755-827 (GSLPPTEEKN…QNHEDNKNKQ (73 aa)) form a disordered region. Basic and acidic residues predominate over residues 760 to 790 (TEEKNNSNTRDKNKDKNKDKDKNKNKDKNPS). Low complexity predominate over residues 791-817 (QDKPNNNNNNNNNDNNNNTKPPENDSN). Over residues 818–827 (QNHEDNKNKQ) the composition is skewed to basic and acidic residues.

This sequence in the N-terminal section; belongs to the glycosyltransferase 51 family. It in the C-terminal section; belongs to the transpeptidase family.

Its subcellular location is the cell membrane. The catalysed reaction is [GlcNAc-(1-&gt;4)-Mur2Ac(oyl-L-Ala-gamma-D-Glu-L-Lys-D-Ala-D-Ala)](n)-di-trans,octa-cis-undecaprenyl diphosphate + beta-D-GlcNAc-(1-&gt;4)-Mur2Ac(oyl-L-Ala-gamma-D-Glu-L-Lys-D-Ala-D-Ala)-di-trans,octa-cis-undecaprenyl diphosphate = [GlcNAc-(1-&gt;4)-Mur2Ac(oyl-L-Ala-gamma-D-Glu-L-Lys-D-Ala-D-Ala)](n+1)-di-trans,octa-cis-undecaprenyl diphosphate + di-trans,octa-cis-undecaprenyl diphosphate + H(+). The enzyme catalyses Preferential cleavage: (Ac)2-L-Lys-D-Ala-|-D-Ala. Also transpeptidation of peptidyl-alanyl moieties that are N-acyl substituents of D-alanine.. The protein operates within cell wall biogenesis; peptidoglycan biosynthesis. Cell wall formation. Synthesis of cross-linked peptidoglycan from the lipid intermediates. The enzyme has a penicillin-insensitive transglycosylase N-terminal domain (formation of linear glycan strands) and a penicillin-sensitive transpeptidase C-terminal domain (cross-linking of the peptide subunits). The sequence is that of Penicillin-binding protein 1A (pbpA) from Clostridium botulinum (strain Langeland / NCTC 10281 / Type F).